Reading from the N-terminus, the 250-residue chain is MSEHHPEKRYEGKAKILYSTADSDVLLTYFKDDATAFNAQKKGTIQGKGEMNCTIAAALLQWLETQGIPTHFIEQTKADEMLVKAVKILPVEVVVRNIAAGSLCKQTGLAQGTVLPQPLVEFYLKDDNLGDPLLTRDRLMLLQIVTAEQLAQLQDYALRINGLMQGFFARCQITLVDFKIEFGTDKTGTILLADEISPDTCRLWDQTETDPNLRVMDKDRFRQDLGNIENAYQTVQARVLAQVQQLQSLA.

This sequence belongs to the SAICAR synthetase family.

The catalysed reaction is 5-amino-1-(5-phospho-D-ribosyl)imidazole-4-carboxylate + L-aspartate + ATP = (2S)-2-[5-amino-1-(5-phospho-beta-D-ribosyl)imidazole-4-carboxamido]succinate + ADP + phosphate + 2 H(+). It participates in purine metabolism; IMP biosynthesis via de novo pathway; 5-amino-1-(5-phospho-D-ribosyl)imidazole-4-carboxamide from 5-amino-1-(5-phospho-D-ribosyl)imidazole-4-carboxylate: step 1/2. This chain is Phosphoribosylaminoimidazole-succinocarboxamide synthase, found in Picosynechococcus sp. (strain ATCC 27264 / PCC 7002 / PR-6) (Agmenellum quadruplicatum).